A 154-amino-acid chain; its full sequence is MSETAPKPETVEIYTDGACSGNPGPGGWGAILRFKGIEKELKGGESPTTNNRMEMMAVLVALNTLTRSCAVDVYTDSEYVKKGMTEWLRGWKARGWKTADKKPVKNDDLWKALDEAAARHKVSWHWVKGHAGHPENERADALAREGIADLRART.

The RNase H type-1 domain occupies 7 to 148 (KPETVEIYTD…ADALAREGIA (142 aa)). Residues aspartate 16, glutamate 54, aspartate 76, and aspartate 140 each contribute to the Mg(2+) site.

The protein belongs to the RNase H family. In terms of assembly, monomer. Mg(2+) serves as cofactor.

Its subcellular location is the cytoplasm. It carries out the reaction Endonucleolytic cleavage to 5'-phosphomonoester.. Functionally, endonuclease that specifically degrades the RNA of RNA-DNA hybrids. The sequence is that of Ribonuclease H from Paramagnetospirillum magneticum (strain ATCC 700264 / AMB-1) (Magnetospirillum magneticum).